A 902-amino-acid chain; its full sequence is Respiratory nitrate reductase alpha chain (902 aa).

Residues His-29, Cys-33, and Cys-37 each contribute to the [4Fe-4S] cluster site.

It belongs to the prokaryotic molybdopterin-containing oxidoreductase family. Heterotrimer composed of an alpha, a beta and a gamma chain. Alpha and beta are catalytic chains; gamma chains are involved in binding the enzyme complex to the cytoplasmic membrane. [4Fe-4S] cluster is required as a cofactor. The cofactor is Mo-bis(molybdopterin guanine dinucleotide).

It localises to the cell membrane. It is found in the cytoplasm. It catalyses the reaction nitrate + a quinol = a quinone + nitrite + H2O. Inhibited by micromolar concentrations of azide. Functionally, the nitrate reductase enzyme complex allows Bradyrhizobium sp. USDA 3045 to use nitrate as an electron acceptor during anaerobic growth. The alpha chain is the actual site of nitrate reduction. This chain is Respiratory nitrate reductase alpha chain (narG), found in Bradyrhizobium sp.